We begin with the raw amino-acid sequence, 723 residues long: Aminodeoxychorismate synthase (723 aa).

Positions 2 to 195 constitute a Glutamine amidotransferase type-1 domain; it reads RTLLVDNYDS…RDLTERHGRT (194 aa). Catalysis depends on C82, which acts as the Nucleophile. The disordered stretch occupies residues 96 to 117; the sequence is VGRAPEPRHGRTSAVRHDGTGL. The segment covering 98–114 has biased composition (basic and acidic residues); the sequence is RAPEPRHGRTSAVRHDG. Active-site residues include H169 and E171. Disordered regions lie at residues 192–219 and 693–723; these read HGRTRHGGRAGHGTLPPPAPARETKATT and FPGRERPGKDLDGEPDDGTDAGAPKDLVLPG. The interval 255–723 is PABB component; the sequence is LDSSRPGGEL…GAPKDLVLPG (469 aa). Basic and acidic residues predominate over residues 695-704; sequence GRERPGKDLD.

The protein in the C-terminal section; belongs to the anthranilate synthase component I family.

The enzyme catalyses chorismate + L-glutamine = 4-amino-4-deoxychorismate + L-glutamate. The protein operates within antibiotic biosynthesis; candicidin biosynthesis. In terms of biological role, involved in candicidin biosynthesis. Catalyzes the biosynthesis of 4-amino-4-deoxychorismate (ADC) from chorismate and glutamine. This is Aminodeoxychorismate synthase from Streptomyces griseus.